We begin with the raw amino-acid sequence, 242 residues long: ATP synthase subunit a (242 aa).

6 helical membrane-spanning segments follow: residues 29–49 (SSIY…LAFY), 84–104 (FIPL…LGMT), 114–134 (IIVT…VGFV), 140–160 (FLTL…MIVI), 189–209 (VIAG…IPLM), and 210–230 (VILI…FTIL).

It belongs to the ATPase A chain family. F-type ATPases have 2 components, CF(1) - the catalytic core - and CF(0) - the membrane proton channel. CF(1) has five subunits: alpha(3), beta(3), gamma(1), delta(1), epsilon(1). CF(0) has three main subunits: a(1), b(2) and c(9-12). The alpha and beta chains form an alternating ring which encloses part of the gamma chain. CF(1) is attached to CF(0) by a central stalk formed by the gamma and epsilon chains, while a peripheral stalk is formed by the delta and b chains.

Its subcellular location is the cell inner membrane. In terms of biological role, key component of the proton channel; it plays a direct role in the translocation of protons across the membrane. This is ATP synthase subunit a from Rickettsia felis (strain ATCC VR-1525 / URRWXCal2) (Rickettsia azadi).